A 132-amino-acid chain; its full sequence is MAGTFTLRVVSPEGNVLKEEAEFVVLPGGNGEIGILPNHAPLISSIEIGVIRYTVNGKVEKIATSGGFVEVSDNKVTILADTAEPGERVDLDRALAAKERAEKRLTQREGIDVRRAELALMRAVARINAARN.

This sequence belongs to the ATPase epsilon chain family. F-type ATPases have 2 components, CF(1) - the catalytic core - and CF(0) - the membrane proton channel. CF(1) has five subunits: alpha(3), beta(3), gamma(1), delta(1), epsilon(1). CF(0) has three main subunits: a, b and c.

The protein localises to the cell membrane. Functionally, produces ATP from ADP in the presence of a proton gradient across the membrane. The chain is ATP synthase epsilon chain from Desulfitobacterium hafniense (strain DSM 10664 / DCB-2).